A 177-amino-acid chain; its full sequence is Dual-action ribosomal maturation protein DarP (177 aa).

Belongs to the DarP family.

It is found in the cytoplasm. In terms of biological role, member of a network of 50S ribosomal subunit biogenesis factors which assembles along the 30S-50S interface, preventing incorrect 23S rRNA structures from forming. Promotes peptidyl transferase center (PTC) maturation. In Histophilus somni (strain 129Pt) (Haemophilus somnus), this protein is Dual-action ribosomal maturation protein DarP.